Consider the following 233-residue polypeptide: Synaptogyrin-4 (233 aa).

An MARVEL domain is found at 18–169 (FLRRPKSISR…QAYLAFQDLR (152 aa)). Transmembrane regions (helical) follow at residues 25-45 (ISRI…LTDG), 66-86 (CSFA…FLAI), 104-124 (LLDF…FCFL), and 145-165 (AAIA…YLAF). The interval 191 to 233 (SPSSTSPSNPPITGPNSLSYTSSALSPYMTTPKAPRLAMMPDS) is disordered. Positions 204–219 (GPNSLSYTSSALSPYM) are enriched in polar residues.

It belongs to the synaptogyrin family.

It is found in the membrane. This is Synaptogyrin-4 (Syngr4) from Mus musculus (Mouse).